A 457-amino-acid polypeptide reads, in one-letter code: Siroheme synthase (457 aa).

Positions methionine 1–threonine 204 are precorrin-2 dehydrogenase /sirohydrochlorin ferrochelatase. NAD(+) contacts are provided by residues aspartate 22–valine 23 and leucine 43–threonine 44. Position 128 is a phosphoserine (serine 128). The tract at residues glycine 216 to histidine 457 is uroporphyrinogen-III C-methyltransferase. Proline 225 contributes to the S-adenosyl-L-methionine binding site. Aspartate 248 serves as the catalytic Proton acceptor. Lysine 270 serves as the catalytic Proton donor. Residues glycine 301 to aspartate 303, isoleucine 306, threonine 331 to alanine 332, methionine 382, and glycine 411 each bind S-adenosyl-L-methionine.

In the N-terminal section; belongs to the precorrin-2 dehydrogenase / sirohydrochlorin ferrochelatase family. The protein in the C-terminal section; belongs to the precorrin methyltransferase family.

It carries out the reaction uroporphyrinogen III + 2 S-adenosyl-L-methionine = precorrin-2 + 2 S-adenosyl-L-homocysteine + H(+). It catalyses the reaction precorrin-2 + NAD(+) = sirohydrochlorin + NADH + 2 H(+). The enzyme catalyses siroheme + 2 H(+) = sirohydrochlorin + Fe(2+). It participates in cofactor biosynthesis; adenosylcobalamin biosynthesis; precorrin-2 from uroporphyrinogen III: step 1/1. The protein operates within cofactor biosynthesis; adenosylcobalamin biosynthesis; sirohydrochlorin from precorrin-2: step 1/1. It functions in the pathway porphyrin-containing compound metabolism; siroheme biosynthesis; precorrin-2 from uroporphyrinogen III: step 1/1. Its pathway is porphyrin-containing compound metabolism; siroheme biosynthesis; siroheme from sirohydrochlorin: step 1/1. It participates in porphyrin-containing compound metabolism; siroheme biosynthesis; sirohydrochlorin from precorrin-2: step 1/1. Its function is as follows. Multifunctional enzyme that catalyzes the SAM-dependent methylations of uroporphyrinogen III at position C-2 and C-7 to form precorrin-2 via precorrin-1. Then it catalyzes the NAD-dependent ring dehydrogenation of precorrin-2 to yield sirohydrochlorin. Finally, it catalyzes the ferrochelation of sirohydrochlorin to yield siroheme. This chain is Siroheme synthase, found in Salmonella schwarzengrund (strain CVM19633).